The primary structure comprises 345 residues: Phosphoribosylformylglycinamidine cyclo-ligase (345 aa).

Belongs to the AIR synthase family.

Its subcellular location is the cytoplasm. It carries out the reaction 2-formamido-N(1)-(5-O-phospho-beta-D-ribosyl)acetamidine + ATP = 5-amino-1-(5-phospho-beta-D-ribosyl)imidazole + ADP + phosphate + H(+). It functions in the pathway purine metabolism; IMP biosynthesis via de novo pathway; 5-amino-1-(5-phospho-D-ribosyl)imidazole from N(2)-formyl-N(1)-(5-phospho-D-ribosyl)glycinamide: step 2/2. The chain is Phosphoribosylformylglycinamidine cyclo-ligase from Shewanella woodyi (strain ATCC 51908 / MS32).